A 350-amino-acid polypeptide reads, in one-letter code: tRNA uridine(34) hydroxylase (350 aa).

The Rhodanese domain maps to 146 to 240; sequence DDPDAIFIDM…YARRAREQGL (95 aa). Cysteine 200 functions as the Cysteine persulfide intermediate in the catalytic mechanism. The segment at 318 to 350 is disordered; it reads QRRRRAGREKGNKIFNKSRGRLNSKLGIPDPTE.

The protein belongs to the TrhO family.

It carries out the reaction uridine(34) in tRNA + AH2 + O2 = 5-hydroxyuridine(34) in tRNA + A + H2O. Its function is as follows. Catalyzes oxygen-dependent 5-hydroxyuridine (ho5U) modification at position 34 in tRNAs. The sequence is that of tRNA uridine(34) hydroxylase from Salmonella arizonae (strain ATCC BAA-731 / CDC346-86 / RSK2980).